Here is a 442-residue protein sequence, read N- to C-terminus: D-serine dehydratase (442 aa).

An N6-(pyridoxal phosphate)lysine modification is found at Lys-118.

This sequence belongs to the serine/threonine dehydratase family. DsdA subfamily. Monomer. The cofactor is pyridoxal 5'-phosphate.

The enzyme catalyses D-serine = pyruvate + NH4(+). The sequence is that of D-serine dehydratase from Escherichia coli O6:H1 (strain CFT073 / ATCC 700928 / UPEC).